The following is a 270-amino-acid chain: Release factor glutamine methyltransferase (270 aa).

Residues 112–116 (GTGSG), aspartate 135, tryptophan 162, and asparagine 178 contribute to the S-adenosyl-L-methionine site. Position 178-181 (178-181 (NPPY)) interacts with substrate.

This sequence belongs to the protein N5-glutamine methyltransferase family. PrmC subfamily.

The catalysed reaction is L-glutaminyl-[peptide chain release factor] + S-adenosyl-L-methionine = N(5)-methyl-L-glutaminyl-[peptide chain release factor] + S-adenosyl-L-homocysteine + H(+). Functionally, methylates the class 1 translation termination release factors RF1/PrfA and RF2/PrfB on the glutamine residue of the universally conserved GGQ motif. The sequence is that of Release factor glutamine methyltransferase from Bordetella pertussis (strain Tohama I / ATCC BAA-589 / NCTC 13251).